The chain runs to 55 residues: Large ribosomal subunit protein bL32c (55 aa).

It belongs to the bacterial ribosomal protein bL32 family.

It is found in the plastid. Its subcellular location is the chloroplast. The polypeptide is Large ribosomal subunit protein bL32c (Atropa belladonna (Belladonna)).